Consider the following 240-residue polypeptide: 1-acyl-sn-glycerol-3-phosphate acyltransferase (240 aa).

Positions 73-78 (HQNNYD) match the HXXXXD motif motif.

It belongs to the 1-acyl-sn-glycerol-3-phosphate acyltransferase family.

It is found in the cell inner membrane. The enzyme catalyses a 1-acyl-sn-glycero-3-phosphate + an acyl-CoA = a 1,2-diacyl-sn-glycero-3-phosphate + CoA. It participates in phospholipid metabolism; CDP-diacylglycerol biosynthesis; CDP-diacylglycerol from sn-glycerol 3-phosphate: step 2/3. Functionally, converts lysophosphatidic acid (LPA) into phosphatidic acid by incorporating acyl moiety at the 2 position. In Haemophilus influenzae (strain ATCC 51907 / DSM 11121 / KW20 / Rd), this protein is 1-acyl-sn-glycerol-3-phosphate acyltransferase (plsC).